The chain runs to 373 residues: ATP phosphoribosyltransferase regulatory subunit (373 aa).

It belongs to the class-II aminoacyl-tRNA synthetase family. HisZ subfamily. In terms of assembly, heteromultimer composed of HisG and HisZ subunits.

It localises to the cytoplasm. The protein operates within amino-acid biosynthesis; L-histidine biosynthesis; L-histidine from 5-phospho-alpha-D-ribose 1-diphosphate: step 1/9. In terms of biological role, required for the first step of histidine biosynthesis. May allow the feedback regulation of ATP phosphoribosyltransferase activity by histidine. This Rhizobium etli (strain ATCC 51251 / DSM 11541 / JCM 21823 / NBRC 15573 / CFN 42) protein is ATP phosphoribosyltransferase regulatory subunit.